The following is a 140-amino-acid chain: MERTLTILKPDCVRKQLIGAVINHIERAGFRVVAMKKIHLTKEAAGEFYAVHRERPFYGELVDFMSSGACVPMILEKENAVADFRTVIGATDPAEAAEGTVRKLYADSKGENIIHGSDSVENAAIEAAFFFSTEEVVRSN.

ATP-binding residues include lysine 9, phenylalanine 57, arginine 85, threonine 91, arginine 102, and asparagine 112. The active-site Pros-phosphohistidine intermediate is histidine 115.

It belongs to the NDK family. As to quaternary structure, homotetramer. Mg(2+) is required as a cofactor.

It is found in the cytoplasm. The catalysed reaction is a 2'-deoxyribonucleoside 5'-diphosphate + ATP = a 2'-deoxyribonucleoside 5'-triphosphate + ADP. It catalyses the reaction a ribonucleoside 5'-diphosphate + ATP = a ribonucleoside 5'-triphosphate + ADP. Functionally, major role in the synthesis of nucleoside triphosphates other than ATP. The ATP gamma phosphate is transferred to the NDP beta phosphate via a ping-pong mechanism, using a phosphorylated active-site intermediate. This Chlorobium chlorochromatii (strain CaD3) protein is Nucleoside diphosphate kinase.